Reading from the N-terminus, the 388-residue chain is Flap endonuclease 1 (388 aa).

Positions 1–104 (MGILGLSKLI…GELAKRAERR (104 aa)) are N-domain. Asp-34 is a Mg(2+) binding site. Residues Arg-47 and Arg-70 each contribute to the DNA site. Residues Asp-86, Glu-158, Glu-160, Asp-179, and Asp-181 each contribute to the Mg(2+) site. Residues 122–253 (EIEKFNRRLV…KRAIELIKTY (132 aa)) are I-domain. Glu-158 lines the DNA pocket. Positions 231 and 233 each coordinate DNA. Asp-233 serves as a coordination point for Mg(2+). Positions 336-344 (TQVRLDSFF) are interaction with PCNA. The segment at 351–388 (PNATAAAKRKAEEIKKSANNKKAKTSGGSGAARGRRPK) is disordered.

This sequence belongs to the XPG/RAD2 endonuclease family. FEN1 subfamily. Interacts with PCNA. Three molecules of FEN1 bind to one PCNA trimer with each molecule binding to one PCNA monomer. PCNA stimulates the nuclease activity without altering cleavage specificity. The cofactor is Mg(2+). Phosphorylated. Phosphorylation upon DNA damage induces relocalization to the nuclear plasma.

Its subcellular location is the nucleus. It is found in the nucleolus. It localises to the nucleoplasm. The protein localises to the mitochondrion. In terms of biological role, structure-specific nuclease with 5'-flap endonuclease and 5'-3' exonuclease activities involved in DNA replication and repair. During DNA replication, cleaves the 5'-overhanging flap structure that is generated by displacement synthesis when DNA polymerase encounters the 5'-end of a downstream Okazaki fragment. It enters the flap from the 5'-end and then tracks to cleave the flap base, leaving a nick for ligation. Also involved in the long patch base excision repair (LP-BER) pathway, by cleaving within the apurinic/apyrimidinic (AP) site-terminated flap. Acts as a genome stabilization factor that prevents flaps from equilibrating into structures that lead to duplications and deletions. Also possesses 5'-3' exonuclease activity on nicked or gapped double-stranded DNA, and exhibits RNase H activity. Also involved in replication and repair of rDNA and in repairing mitochondrial DNA. The sequence is that of Flap endonuclease 1 from Drosophila mojavensis (Fruit fly).